Consider the following 410-residue polypeptide: Trifunctional NAD biosynthesis/regulator protein NadR (410 aa).

Residues 7–62 (LKTAIKQQGCTLQQVADASGMTKGYLSQLLNAKIKSPSAQKLEALHRFLGLEFPRQ) form the HTH cro/C1-type domain. Residues 18 to 37 (LQQVADASGMTKGYLSQLLN) constitute a DNA-binding region (H-T-H motif). Positions 63–229 (KKTIGVVFGK…EYIPTEVKPF (167 aa)) are nicotinamide mononucleotide adenylyltransferase. NAD(+)-binding positions include 70–73 (FGKF), H77, R104, 144–157 (EEGMEPYPHGWDVW), 177–179 (TSE), 204–206 (MSI), 259–261 (SAW), and 294–297 (YIDF). Positions 230–410 (FVRTVAILGG…LVREMMGEQR (181 aa)) are ribosylnicotinamide kinase.

In the central section; belongs to the bacterial NMN adenylyltransferase family. It in the C-terminal section; belongs to the bacterial RNK family. In terms of assembly, homotetramer.

It is found in the cell membrane. Its subcellular location is the cytoplasm. It carries out the reaction beta-nicotinamide D-ribonucleotide + ATP + H(+) = diphosphate + NAD(+). The catalysed reaction is beta-nicotinamide D-riboside + ATP = beta-nicotinamide D-ribonucleotide + ADP + H(+). It functions in the pathway cofactor biosynthesis; NAD(+) biosynthesis [regulation]. It participates in cofactor biosynthesis; NAD(+) biosynthesis; NAD(+) from nicotinamide D-ribonucleotide: step 1/1. Its activity is regulated as follows. Feed-back regulated by NAD. A high level of NAD causes NadR to lose enzymatic activity and repress several NAD synthetic genes; conversely, a low NAD level activates the assimilatory enzymatic activities and leads to derepression of biosynthetic genes. Its function is as follows. This enzyme has three activities: DNA binding, nicotinamide mononucleotide (NMN) adenylyltransferase and ribosylnicotinamide (RN) kinase. The DNA-binding domain binds to the nadB operator sequence in an NAD- and ATP-dependent manner. As NAD levels increase within the cell, the affinity of NadR for the nadB operator regions of nadA, nadB, and pncB increases, repressing the transcription of these genes. The RN kinase activity catalyzes the phosphorylation of RN to form nicotinamide ribonucleotide. The NMN adenylyltransferase activity catalyzes the transfer of the AMP moiety of ATP to nicotinamide ribonucleotide to form NAD(+). The NMN adenylyltransferase domain also functions as the NAD and ATP sensor. The sequence is that of Trifunctional NAD biosynthesis/regulator protein NadR (nadR) from Escherichia coli (strain K12).